The following is a 257-amino-acid chain: Fimbrial assembly protein, serogroup I (257 aa).

The sequence is that of Fimbrial assembly protein, serogroup I (fimB) from Dichelobacter nodosus (Bacteroides nodosus).